A 344-amino-acid polypeptide reads, in one-letter code: DNA polymerase III subunit delta (344 aa).

It belongs to the DNA polymerase HolA subunit family. In terms of assembly, DNA polymerase III contains a core (composed of alpha, epsilon and theta chains) that associates with a tau subunit. This core dimerizes to form the POLIII' complex. PolIII' associates with the gamma complex (composed of gamma, delta, delta', psi and chi chains) and with the beta chain to form the complete DNA polymerase III complex.

The enzyme catalyses DNA(n) + a 2'-deoxyribonucleoside 5'-triphosphate = DNA(n+1) + diphosphate. DNA polymerase III is a complex, multichain enzyme responsible for most of the replicative synthesis in bacteria. This DNA polymerase also exhibits 3' to 5' exonuclease activity. The delta subunit seems to interact with the gamma subunit to transfer the beta subunit on the DNA. The protein is DNA polymerase III subunit delta (holA) of Haemophilus influenzae (strain ATCC 51907 / DSM 11121 / KW20 / Rd).